Reading from the N-terminus, the 145-residue chain is Transcriptional regulator ZitR (145 aa).

Residues 1 to 142 (MSLANQIDQF…ISQFLSVLTE (142 aa)) enclose the HTH marR-type domain. 4 residues coordinate Zn(2+): E23, C29, E40, and H41. The H-T-H motif DNA-binding region spans 53–76 (NARIAEQLKISPAAVTKALKKLQE). Zn(2+) is bound by residues E106, H107, and H111.

Homodimer.

With respect to regulation, zinc acts as a corepressor and is required for DNA-binding activity. Binds up to two zinc ligands per monomer. Inactive under zinc deprivation. Its function is as follows. Zinc-responsive regulator that represses expression of the zit operon in the presence of zinc. Acts by binding two palindromic operator sites overlapping the -35 and -10 boxes of the zit promoter. Could be a sensitive sensor of intracellular zinc to efficiently respond to zinc variations in the environment. This Lactococcus lactis subsp. cremoris (strain MG1363) protein is Transcriptional regulator ZitR (zitR).